The following is a 632-amino-acid chain: 1-deoxy-D-xylulose-5-phosphate synthase (632 aa).

Thiamine diphosphate contacts are provided by residues H87 and 128 to 130; that span reads GHS. D159 contributes to the Mg(2+) binding site. Residues 160–161, N188, F295, and E377 contribute to the thiamine diphosphate site; that span reads GA. N188 is a binding site for Mg(2+).

Belongs to the transketolase family. DXPS subfamily. Homodimer. Mg(2+) is required as a cofactor. Thiamine diphosphate serves as cofactor.

The catalysed reaction is D-glyceraldehyde 3-phosphate + pyruvate + H(+) = 1-deoxy-D-xylulose 5-phosphate + CO2. It functions in the pathway metabolic intermediate biosynthesis; 1-deoxy-D-xylulose 5-phosphate biosynthesis; 1-deoxy-D-xylulose 5-phosphate from D-glyceraldehyde 3-phosphate and pyruvate: step 1/1. Its function is as follows. Catalyzes the acyloin condensation reaction between C atoms 2 and 3 of pyruvate and glyceraldehyde 3-phosphate to yield 1-deoxy-D-xylulose-5-phosphate (DXP). The protein is 1-deoxy-D-xylulose-5-phosphate synthase of Stutzerimonas stutzeri (strain A1501) (Pseudomonas stutzeri).